Consider the following 494-residue polypeptide: UPF0371 protein SPy_1343/M5005_Spy1095 (494 aa).

The protein belongs to the UPF0371 family.

This Streptococcus pyogenes serotype M1 protein is UPF0371 protein SPy_1343/M5005_Spy1095.